The following is a 379-amino-acid chain: Homoserine O-succinyltransferase (379 aa).

One can recognise an AB hydrolase-1 domain in the interval 51-360 (NAVLICHALS…DSPYGHDAFL (310 aa)). Residue Ser-157 is the Nucleophile of the active site. Arg-227 lines the substrate pocket. Active-site residues include Asp-323 and His-356. Residue Asp-357 coordinates substrate.

It belongs to the AB hydrolase superfamily. MetX family. In terms of assembly, homodimer.

The protein localises to the cytoplasm. The enzyme catalyses L-homoserine + succinyl-CoA = O-succinyl-L-homoserine + CoA. The protein operates within amino-acid biosynthesis; L-methionine biosynthesis via de novo pathway; O-succinyl-L-homoserine from L-homoserine: step 1/1. Functionally, transfers a succinyl group from succinyl-CoA to L-homoserine, forming succinyl-L-homoserine. The polypeptide is Homoserine O-succinyltransferase (Pseudomonas putida (strain W619)).